Reading from the N-terminus, the 244-residue chain is Phosphoadenosine 5'-phosphosulfate reductase (244 aa).

The Nucleophile; cysteine thiosulfonate intermediate role is filled by C239.

This sequence belongs to the PAPS reductase family. CysH subfamily.

The protein localises to the cytoplasm. It catalyses the reaction [thioredoxin]-disulfide + sulfite + adenosine 3',5'-bisphosphate + 2 H(+) = [thioredoxin]-dithiol + 3'-phosphoadenylyl sulfate. The protein operates within sulfur metabolism; hydrogen sulfide biosynthesis; sulfite from sulfate: step 3/3. Catalyzes the formation of sulfite from phosphoadenosine 5'-phosphosulfate (PAPS) using thioredoxin as an electron donor. This is Phosphoadenosine 5'-phosphosulfate reductase from Klebsiella pneumoniae subsp. pneumoniae (strain ATCC 700721 / MGH 78578).